The primary structure comprises 426 residues: 6-Hydroxy-7-prenyldeoxybrevianamide E synthase notC (426 aa).

Glu94 contacts substrate. Arg105, Lys191, and Tyr193 together coordinate dimethylallyl diphosphate. Tyr195 contributes to the substrate binding site. Dimethylallyl diphosphate contacts are provided by Lys267, Tyr269, Gln352, Tyr354, Tyr418, and Tyr422.

This sequence belongs to the tryptophan dimethylallyltransferase family.

The enzyme catalyses 6-hydroxydeoxybrevianamide E + dimethylallyl diphosphate = notoamide S + diphosphate. The protein operates within alkaloid biosynthesis. Addition of 5 mM Mg(2+), Ca(2+) or Mn(2+) slightly enhances catalysis (about 100-120%). Significant reduction of enzyme activity (2%-35%) is observed with Cu(2+), Zn(2+), Fe(2+), or Sn(2+) (5 mM). Functionally, prenyltransferase; part of the gene cluster that mediates the biosynthesis of notoamide, a fungal indole alkaloid that belongs to a family of natural products containing a characteristic bicyclo[2.2.2]diazaoctane core. The first step of notoamide biosynthesis involves coupling of L-proline and L-tryptophan by the bimodular NRPS notE, to produce cyclo-L-tryptophan-L-proline called brevianamide F. The reverse prenyltransferase notF then acts as a deoxybrevianamide E synthase and converts brevianamide F to deoxybrevianamide E via reverse prenylation at C-2 of the indole ring leading to the bicyclo[2.2.2]diazaoctane core. Deoxybrevianamide E is further hydroxylated at C-6 of the indole ring, likely catalyzed by the cytochrome P450 monooxygenase notG, to yield 6-hydroxy-deoxybrevianamide E. 6-hydroxy-deoxybrevianamide E is a specific substrate of the prenyltransferase notC for normal prenylation at C-7 to produce 6-hydroxy-7-prenyl-deoxybrevianamide, also called notoamide S. As the proposed pivotal branching point in notoamide biosynthesis, notoamide S can be diverted to notoamide E through an oxidative pyran ring closure putatively catalyzed by either notH cytochrome P450 monooxygenase or the notD FAD-linked oxidoreductase. This step would be followed by an indole 2,3-epoxidation-initiated pinacol-like rearrangement catalyzed by the notB FAD-dependent monooxygenase leading to the formation of notoamide C and notoamide D. On the other hand notoamide S is converted to notoamide T by notH (or notD), a bifunctional oxidase that also functions as the intramolecular Diels-Alderase responsible for generation of (+)-notoamide T. To generate antipodal (-)-notoaminide T, notH' (or notD') in Aspergillus versicolor is expected to catalyze a Diels-Alder reaction leading to the opposite stereochemistry. The remaining oxidoreductase notD (or notH) likely catalyzes the oxidative pyran ring formation to yield (+)-stephacidin A. The FAD-dependent monooxygenase notI is highly similar to notB and is predicted to catalyze a similar conversion from (+)-stephacidin A to (-)-notoamide B via the 2,3-epoxidation of (+)-stephacidin A followed by a pinacol-type rearrangement. Finally, it remains unclear which enzyme could be responsible for the final hydroxylation steps leading to notoamide A and sclerotiamide. The protein is 6-Hydroxy-7-prenyldeoxybrevianamide E synthase notC of Aspergillus sp. (strain MF297-2).